The chain runs to 227 residues: MICOS complex subunit MIC19 (227 aa).

A lipid anchor (N-myristoyl glycine) is attached at Gly-2. At Ser-29 the chain carries Phosphoserine. Disordered stretches follow at residues 34 to 61 (DRMK…SDEE) and 73 to 92 (EQAK…KELD). Residues 39 to 49 (SSPSGSKSQRY) show a composition bias toward polar residues. The residue at position 49 (Tyr-49) is a Phosphotyrosine. Phosphoserine is present on residues Ser-50, Ser-56, and Ser-58. N6-acetyllysine is present on Lys-142. The CHCH domain maps to 180 to 222 (HPVCADLQAKILQCYRENTHQTLKCSALATQYMHCVNHAKQSM). Short sequence motifs (cx9C motif) lie at residues 183 to 193 (CADLQAKILQC) and 204 to 214 (CSALATQYMHC). 2 disulfides stabilise this stretch: Cys-183-Cys-214 and Cys-193-Cys-204.

Belongs to the MICOS complex subunit Mic19 family. Metazoan Mic19 subfamily. In terms of assembly, component of the mitochondrial contact site and cristae organizing system (MICOS) complex, composed of at least MICOS10/MIC10, CHCHD3/MIC19, CHCHD6/MIC25, APOOL/MIC27, IMMT/MIC60, APOO/MIC23/MIC26 and MICOS13/MIC13. This complex was also known under the names MINOS or MitOS complex. The MICOS complex associates with mitochondrial outer membrane proteins SAMM50, MTX1 and MTX2 (together described as components of the mitochondrial outer membrane sorting assembly machinery (SAM) complex) and DNAJC11, mitochondrial inner membrane protein TMEM11 and with HSPA9. The MICOS and SAM complexes together with DNAJC11 are part of a large protein complex spanning both membranes termed the mitochondrial intermembrane space bridging (MIB) complex. Interacts with HSPA1A/HSPA1B and OPA1, preferentially with the soluble OPA1 form. Interacts with IMMT/MIC60. (Microbial infection) Interacts with human cytomegalovirus protein UL13; this interaction alters cristae architecture. Detected at low levels in brain, placenta, lung, liver, kidney and pancreas with increased levels in heart and skeletal muscle. Higher expression in primary lung cancers than in normal lung tissue.

It localises to the mitochondrion inner membrane. The protein localises to the cytoplasm. The protein resides in the nucleus. Its subcellular location is the mitochondrion. In terms of biological role, component of the MICOS complex, a large protein complex of the mitochondrial inner membrane that plays crucial roles in the maintenance of crista junctions, inner membrane architecture, and formation of contact sites to the outer membrane. Plays an important role in the maintenance of the MICOS complex stability and the mitochondrial cristae morphology. Has also been shown to function as a transcription factor which binds to the BAG1 promoter and represses BAG1 transcription. The sequence is that of MICOS complex subunit MIC19 (CHCHD3) from Homo sapiens (Human).